Here is a 237-residue protein sequence, read N- to C-terminus: CDP-diacylglycerol--inositol 3-phosphatidyltransferase (237 aa).

The Cytoplasmic portion of the chain corresponds to 1–12 (MGKNEQKDPNVY). A helical membrane pass occupies residues 13 to 33 (FFVPNLIGFTRVFLVLISLYF). Residues 34 to 41 (MSWHPNYC) lie on the Lumenal side of the membrane. A helical membrane pass occupies residues 42–62 (TIVYLYSSLLDAFDGWAARKL). 2 residues coordinate Mg(2+): Asp-52 and Asp-55. The a CDP-1,2-diacyl-sn-glycerol site is built by Gly-56, Arg-60, and Thr-66. The Cytoplasmic portion of the chain corresponds to 63–71 (HQATNFGAI). Residues 72–92 (LDMVTDRCATSCLLCFLCAAY) form a helical membrane-spanning segment. Positions 73 and 77 each coordinate Mg(2+). Residue Asp-77 is the Proton acceptor of the active site. Topologically, residues 93-94 (PK) are lumenal. The helical transmembrane segment at 95–115 (YAIIFQLLVSLDLASHYMHMY) threads the bilayer. Topologically, residues 116 to 144 (STLHQGASSHKTVTKKHNWMLRLYYGNNK) are cytoplasmic. The helical transmembrane segment at 145-165 (VLFIFCAANEMFFVALYLLSF) threads the bilayer. Residues 166–185 (TPRTPPKLGYLPVPSFIYST) lie on the Lumenal side of the membrane. The helical transmembrane segment at 186–206 (GELPLSYPTLLAVLCGPICLA) threads the bilayer. At 207 to 237 (KQIINVVQLVNAANALVKMDVEQRRAAKKLQ) the chain is on the cytoplasmic side.

This sequence belongs to the CDP-alcohol phosphatidyltransferase class-I family. It depends on Mn(2+) as a cofactor. The cofactor is Mg(2+).

Its subcellular location is the microsome membrane. The protein resides in the endoplasmic reticulum membrane. It is found in the golgi apparatus membrane. It localises to the mitochondrion outer membrane. The enzyme catalyses a CDP-1,2-diacyl-sn-glycerol + myo-inositol = a 1,2-diacyl-sn-glycero-3-phospho-(1D-myo-inositol) + CMP + H(+). Functionally, catalyzes the synthesis of phosphatidylinositol (PtdIns). The polypeptide is CDP-diacylglycerol--inositol 3-phosphatidyltransferase (pis1) (Schizosaccharomyces pombe (strain 972 / ATCC 24843) (Fission yeast)).